A 326-amino-acid chain; its full sequence is Lipopolysaccharide heptosyltransferase 1 (326 aa).

Positions 187, 188, 192, 222, and 242 each coordinate ADP. ADP-L-glycero-beta-D-manno-heptose contacts are provided by Thr-187, Thr-188, Lys-192, Glu-222, Met-242, Asp-261, Thr-262, Gly-263, and His-266. Positions 262 and 263 each coordinate ADP.

It belongs to the glycosyltransferase 9 family. In terms of assembly, monomer.

It localises to the cell inner membrane. It catalyses the reaction an alpha-Kdo-(2-&gt;4)-alpha-Kdo-(2-&gt;6)-lipid A + ADP-L-glycero-beta-D-manno-heptose = an L-alpha-D-Hep-(1-&gt;5)-[alpha-Kdo-(2-&gt;4)]-alpha-Kdo-(2-&gt;6)-lipid A + ADP + H(+). It carries out the reaction alpha-Kdo-(2-&gt;4)-alpha-Kdo-(2-&gt;6)-lipid A (E. coli) + ADP-L-glycero-beta-D-manno-heptose = L-alpha-D-Hep-(1-&gt;5)-[alpha-Kdo-(2-&gt;4)]-alpha-Kdo-(2-&gt;6)-lipid A (E. coli) + ADP + H(+). The protein operates within bacterial outer membrane biogenesis; LPS core biosynthesis. Inhibited by ADP-L-glycero-beta-D-gluco-2-deoxy-2-fluoro-heptose (ADP-2F-heptose), a non-cleavable analog of the substrate ADP-L-glycero-beta-D-manno-heptose. Glycosyltransferase involved in the biosynthesis of the core oligosaccharide region of lipopolysaccharide (LPS). Catalyzes the addition of the first heptose unit to one 3-deoxy-D-manno-octulosonic acid (Kdo) residue of the Kdo2-lipid A module. This chain is Lipopolysaccharide heptosyltransferase 1, found in Escherichia coli O18:K1:H7 (strain RS218 / NMEC).